Here is a 731-residue protein sequence, read N- to C-terminus: 1,4-alpha-glucan branching enzyme GlgB (731 aa).

An intrachain disulfide couples cysteine 193 to cysteine 617. The Nucleophile role is filled by aspartate 411. The active-site Proton donor is glutamate 464.

Belongs to the glycosyl hydrolase 13 family. GlgB subfamily. In terms of assembly, monomer.

It carries out the reaction Transfers a segment of a (1-&gt;4)-alpha-D-glucan chain to a primary hydroxy group in a similar glucan chain.. The protein operates within glycan biosynthesis; glycogen biosynthesis. It participates in capsule biogenesis; capsule polysaccharide biosynthesis. Functionally, essential enzyme that catalyzes the formation of the alpha-1,6-glucosidic linkages in glucan chains by scission of a 1,4-alpha-linked oligosaccharide from growing alpha-1,4-glucan chains and the subsequent attachment of the oligosaccharide to the alpha-1,6 position. Is involved in the biosynthesis of both glycogen and capsular alpha-D-glucan. The chain is 1,4-alpha-glucan branching enzyme GlgB (glgB) from Mycobacterium tuberculosis (strain CDC 1551 / Oshkosh).